The following is a 241-amino-acid chain: Homeobox protein TGIF2LX (241 aa).

Disordered regions lie at residues 1-58 (MEAA…GNLP) and 126-209 (TGKD…VSPE). Residues 21–39 (AKTQSPAQDTSIMSRNNAD) show a composition bias toward polar residues. Positions 48–111 (EHKKKRKGNL…INARRRILPD (64 aa)) form a DNA-binding region, homeobox; TALE-type.

Belongs to the TALE/TGIF homeobox family.

It is found in the nucleus. In terms of biological role, may have a transcription role in testis. The polypeptide is Homeobox protein TGIF2LX (TGIF2LX) (Gorilla gorilla gorilla (Western lowland gorilla)).